Consider the following 356-residue polypeptide: Serpentine receptor class epsilon-29 (356 aa).

The next 7 membrane-spanning stretches (helical) occupy residues 29 to 49 (IVEL…IYII), 61 to 81 (ILAI…LITI), 119 to 139 (LLIF…FGVL), 161 to 181 (LFIP…TSLA), 190 to 210 (FLAQ…YFFV), 251 to 271 (LVFV…ALFY), and 281 to 301 (FVEN…IFSV).

Belongs to the nematode receptor-like protein sre family.

The protein resides in the membrane. This is Serpentine receptor class epsilon-29 (sre-29) from Caenorhabditis elegans.